A 184-amino-acid chain; its full sequence is Large ribosomal subunit protein uL5c (184 aa).

It belongs to the universal ribosomal protein uL5 family. Part of the 50S ribosomal subunit; contacts the 5S rRNA.

The protein resides in the plastid. It is found in the chloroplast. Binds 5S rRNA, forms part of the central protuberance of the 50S subunit. In Nephroselmis olivacea (Green alga), this protein is Large ribosomal subunit protein uL5c (rpl5).